Here is a 414-residue protein sequence, read N- to C-terminus: tRNA methyltransferase 10 homolog C (414 aa).

A mitochondrion-targeting transit peptide spans 1–35 (MNVTVRFLRPFARYLVPYTFHRTRSNSYSRVLQRY). Serine 79 is subject to Phosphoserine. The stretch at 133-162 (GKEMMKKAKQMKKEMKAAAREEAKRARSLE) forms a coiled coil. Residues 186 to 378 (LGWKGVQAMQ…KFVPRRKHTG (193 aa)) form the SAM-dependent MTase TRM10-type domain.

Belongs to the class IV-like SAM-binding methyltransferase superfamily. TRM10 family. As to quaternary structure, component of mitochondrial ribonuclease P, a complex composed of TRMT10C/MRPP1, HSD17B10/MRPP2 and PRORP/MRPP3. Interacts with HSD17B10/MRPP2; forming the MRPP1-MRPP2 subcomplex of the mitochondrial ribonuclease P complex. Interacts with GRSF1.

The protein resides in the mitochondrion matrix. The protein localises to the mitochondrion nucleoid. It carries out the reaction adenosine(9) in tRNA + S-adenosyl-L-methionine = N(1)-methyladenosine(9) in tRNA + S-adenosyl-L-homocysteine + H(+). The catalysed reaction is guanosine(9) in tRNA + S-adenosyl-L-methionine = N(1)-methylguanosine(9) in tRNA + S-adenosyl-L-homocysteine + H(+). The enzyme catalyses an adenosine in mRNA + S-adenosyl-L-methionine = an N(1)-methyladenosine in mRNA + S-adenosyl-L-homocysteine + H(+). In terms of biological role, mitochondrial tRNA N(1)-methyltransferase involved in mitochondrial tRNA maturation. Component of mitochondrial ribonuclease P, a complex composed of TRMT10C/MRPP1, HSD17B10/MRPP2 and PRORP/MRPP3, which cleaves tRNA molecules in their 5'-ends. Together with HSD17B10/MRPP2, forms a subcomplex of the mitochondrial ribonuclease P, named MRPP1-MRPP2 subcomplex, which displays functions that are independent of the ribonuclease P activity. The MRPP1-MRPP2 subcomplex catalyzes the formation of N(1)-methylguanine and N(1)-methyladenine at position 9 (m1G9 and m1A9, respectively) in tRNAs; TRMT10C/MRPP1 acting as the catalytic N(1)-methyltransferase subunit. The MRPP1-MRPP2 subcomplex also acts as a tRNA maturation platform: following 5'-end cleavage by the mitochondrial ribonuclease P complex, the MRPP1-MRPP2 subcomplex enhances the efficiency of 3'-processing catalyzed by ELAC2, retains the tRNA product after ELAC2 processing and presents the nascent tRNA to the mitochondrial CCA tRNA nucleotidyltransferase TRNT1 enzyme. In addition to tRNA N(1)-methyltransferase activity, TRMT10C/MRPP1 also acts as a mRNA N(1)-methyltransferase by mediating methylation of adenosine residues at the N(1) position of MT-ND5 mRNA. Associates with mitochondrial DNA complexes at the nucleoids to initiate RNA processing and ribosome assembly. The polypeptide is tRNA methyltransferase 10 homolog C (Rattus norvegicus (Rat)).